The primary structure comprises 423 residues: Dihydroorotase (423 aa).

2 residues coordinate Zn(2+): His60 and His62. Substrate is bound by residues 62 to 64 (HFR) and Asn94. Asp152, His179, His232, and Asp305 together coordinate Zn(2+). The active site involves Asp305. Substrate is bound by residues His309 and 323-324 (PG).

It belongs to the metallo-dependent hydrolases superfamily. DHOase family. Class I DHOase subfamily. The cofactor is Zn(2+).

It catalyses the reaction (S)-dihydroorotate + H2O = N-carbamoyl-L-aspartate + H(+). It participates in pyrimidine metabolism; UMP biosynthesis via de novo pathway; (S)-dihydroorotate from bicarbonate: step 3/3. Catalyzes the reversible cyclization of carbamoyl aspartate to dihydroorotate. This Sulfurihydrogenibium sp. (strain YO3AOP1) protein is Dihydroorotase.